A 430-amino-acid polypeptide reads, in one-letter code: Enolase (430 aa).

Gln164 provides a ligand contact to (2R)-2-phosphoglycerate. Glu208 (proton donor) is an active-site residue. Mg(2+) is bound by residues Asp245, Glu288, and Asp315. Lys340, Arg369, Ser370, and Lys391 together coordinate (2R)-2-phosphoglycerate. Catalysis depends on Lys340, which acts as the Proton acceptor.

It belongs to the enolase family. Mg(2+) is required as a cofactor.

It localises to the cytoplasm. The protein localises to the secreted. The protein resides in the cell surface. It carries out the reaction (2R)-2-phosphoglycerate = phosphoenolpyruvate + H2O. It participates in carbohydrate degradation; glycolysis; pyruvate from D-glyceraldehyde 3-phosphate: step 4/5. In terms of biological role, catalyzes the reversible conversion of 2-phosphoglycerate (2-PG) into phosphoenolpyruvate (PEP). It is essential for the degradation of carbohydrates via glycolysis. In Thermococcus gammatolerans (strain DSM 15229 / JCM 11827 / EJ3), this protein is Enolase.